A 1363-amino-acid polypeptide reads, in one-letter code: Insulin-like peptide receptor (1363 aa).

The first 29 residues, 1–29 (MRVVDKMAGLMWAALTLVIGLGLLVPSNG), serve as a signal peptide directing secretion. N51, N97, N137, N278, N483, N599, N617, N665, N666, N711, N732, N736, N743, N816, N885, and N898 each carry an N-linked (GlcNAc...) asparagine glycan. 2 consecutive Fibronectin type-III domains span residues 473 to 586 (SFSR…TDAD) and 590 to 680 (HPQD…CPKS). Fibronectin type-III domains are found at residues 712–804 (ETRA…LART) and 813–912 (IPGN…VEEE). At 721 to 928 (ELPVTARPFY…QDPQQQVPVS (208 aa)) the chain is on the extracellular side. The tract at residues 739–759 (LPSTNRTVPPTPTPNPNPQLE) is disordered. A helical transmembrane segment spans residues 929 to 949 (LMIGMGVGFSLLLILAVIFGI). The Cytoplasmic segment spans residues 950–1363 (WYCTKKRFGD…NLRIPKSTLC (414 aa)). Residues 994-1283 (ITLIRELGQG…EIVEILSPEL (290 aa)) enclose the Protein kinase domain. Residues 1000–1008 (LGQGSFGMV) and K1028 each bind ATP. The segment at 1091–1117 (PEEDVGLSDSPASNEAKNSPFAENDND) is disordered. D1148 serves as the catalytic Proton acceptor. The residue at position 1174 (Y1174) is a Phosphotyrosine; by autocatalysis. A disordered region spans residues 1316–1363 (DTETEMYPSGSEFSSTPSPPSETPYSHMNGSHPQNGSMNLRIPKSTLC). The segment covering 1322–1331 (YPSGSEFSST) has biased composition (low complexity). Over residues 1343–1353 (MNGSHPQNGSM) the composition is skewed to polar residues.

It belongs to the protein kinase superfamily. Tyr protein kinase family. Insulin receptor subfamily. As to quaternary structure, probable tetramer of 2 alpha and 2 beta chains linked by disulfide bonds. The alpha chains contribute to the formation of the ligand-binding domain, while the beta chains carry the kinase domain. It depends on Mn(2+) as a cofactor.

It is found in the membrane. It catalyses the reaction L-tyrosyl-[protein] + ATP = O-phospho-L-tyrosyl-[protein] + ADP + H(+). Functionally, this receptor binds to the insulin related peptide and has a tyrosine-protein kinase activity. The sequence is that of Insulin-like peptide receptor from Branchiostoma lanceolatum (Common lancelet).